A 557-amino-acid chain; its full sequence is UvrABC system protein C (557 aa).

The GIY-YIG domain occupies 14-89 (EEPGVYIFKN…IKKYRPKYNV (76 aa)). A UVR domain is found at 194–229 (EEVFDYLKEKMETHSKMLDFENAAKYRDLLLNLSNV).

It belongs to the UvrC family. As to quaternary structure, interacts with UvrB in an incision complex.

The protein resides in the cytoplasm. Functionally, the UvrABC repair system catalyzes the recognition and processing of DNA lesions. UvrC both incises the 5' and 3' sides of the lesion. The N-terminal half is responsible for the 3' incision and the C-terminal half is responsible for the 5' incision. The protein is UvrABC system protein C of Thermotoga sp. (strain RQ2).